The following is a 297-amino-acid chain: Indole-3-glycerol phosphate synthase (297 aa).

This sequence belongs to the TrpC family.

It carries out the reaction 1-(2-carboxyphenylamino)-1-deoxy-D-ribulose 5-phosphate + H(+) = (1S,2R)-1-C-(indol-3-yl)glycerol 3-phosphate + CO2 + H2O. Its pathway is amino-acid biosynthesis; L-tryptophan biosynthesis; L-tryptophan from chorismate: step 4/5. The polypeptide is Indole-3-glycerol phosphate synthase (Trichodesmium erythraeum (strain IMS101)).